Reading from the N-terminus, the 726-residue chain is Cyclic nucleotide-gated ion channel 2 (726 aa).

The Cytoplasmic segment spans residues 1 to 127; the sequence is MPSHPNFIFR…SKRVQRWNRA (127 aa). Residues 26–46 are disordered; the sequence is IDENSNLQINGGDSSSSGSDE. The segment covering 36-45 has biased composition (low complexity); the sequence is GGDSSSSGSD. Residues 128 to 148 form a helical membrane-spanning segment; the sequence is LLLARGMALAVDPLFFYALSI. Residues 149-162 are Extracellular-facing; that stretch reads GRTTGPACLYMDGA. A helical transmembrane segment spans residues 163–183; that stretch reads FAAVVTVLRTCLDAVHLWHVW. At 184–219 the chain is on the cytoplasmic side; that stretch reads LQFRLAYVSRESLVVGCGKLVWDPRAIASHYARSLT. The chain crosses the membrane as a helical span at residues 220–240; sequence GFWFDVIVILPVPQAVFWLVV. Topologically, residues 241–254 are extracellular; the sequence is PKLIREEKVKLIMT. A helical transmembrane segment spans residues 255–275; sequence ILLLIFLFQFLPKIYHCICLM. The Cytoplasmic segment spans residues 276-282; that stretch reads RRMQKVT. Residues 283-303 traverse the membrane as a helical segment; the sequence is GYIFGTIWWGFALNLIAYFIA. The Extracellular segment spans residues 304–424; that stretch reads SHVAGGCWYV…ANDLEPTSNW (121 aa). Residues 425-445 form a helical membrane-spanning segment; sequence LEVIFSIVMVLSGLLLFTLLI. The Cytoplasmic segment spans residues 446 to 726; the sequence is GNIQVFLHAV…MSIRPHDHLE (281 aa). Residues 531 to 661 and aspartate 600 each bind a nucleoside 3',5'-cyclic phosphate; that span reads LFRG…ARYY. A calmodulin-binding region spans residues 645–661; that stretch reads FRYKFANERLKRTARYY. The 30-residue stretch at 666–695 folds into the IQ domain; that stretch reads RTWAAVNIQMAWRRRRKRTRGENIGGSMSP.

The protein belongs to the cyclic nucleotide-gated cation channel (TC 1.A.1.5) family. As to quaternary structure, homotetramer or heterotetramer (Potential). Binds calmodulin-1/4 with a higher affinity than calmodulin-2/3/5. As to expression, expressed in the whole plant but only weakly in roots. Strongly expressed in the expanded cotyledons of 14-day-old seedlings and detected later in leaves after the transition to flowering. Also detected in flowers during organ senescence and in the dehiscence zone of siliques.

It is found in the cell membrane. In terms of biological role, acts as a cyclic nucleotide-gated ion channel. Permeable to potassium and calcium in a cyclic nucleotide-dependent fashion (cAMP or cGMP). Could also transport lithium, cesium and rubium and displays a strong selectivity against sodium. Seems to directly participate in pathogen-induced calcium influx. May function in homeostasis, re-establishing ionic balance after defense action and/or other stimuli. Could mediate the initiation of the developmentally regulated cell death programs. This chain is Cyclic nucleotide-gated ion channel 2 (CNGC2), found in Arabidopsis thaliana (Mouse-ear cress).